Here is a 369-residue protein sequence, read N- to C-terminus: Flagellar P-ring protein 2 (369 aa).

Residues 1–24 form the signal peptide; it reads MCAFAAILSLLSVLLMATSRSSDA.

It belongs to the FlgI family. The basal body constitutes a major portion of the flagellar organelle and consists of four rings (L,P,S, and M) mounted on a central rod.

The protein localises to the periplasm. It localises to the bacterial flagellum basal body. Functionally, assembles around the rod to form the L-ring and probably protects the motor/basal body from shearing forces during rotation. The protein is Flagellar P-ring protein 2 of Burkholderia thailandensis (strain ATCC 700388 / DSM 13276 / CCUG 48851 / CIP 106301 / E264).